The sequence spans 357 residues: Fructose-1,6-bisphosphatase class 1 3 (357 aa).

Mg(2+) contacts are provided by Glu94, Asp116, Leu118, and Asp119. Substrate-binding positions include 119 to 122 (DGSS) and Asn211. A Mg(2+)-binding site is contributed by Glu283.

The protein belongs to the FBPase class 1 family. As to quaternary structure, homotetramer. The cofactor is Mg(2+).

It is found in the cytoplasm. It carries out the reaction beta-D-fructose 1,6-bisphosphate + H2O = beta-D-fructose 6-phosphate + phosphate. It participates in carbohydrate biosynthesis; Calvin cycle. The protein is Fructose-1,6-bisphosphatase class 1 3 of Methylibium petroleiphilum (strain ATCC BAA-1232 / LMG 22953 / PM1).